A 321-amino-acid polypeptide reads, in one-letter code: Putative zinc finger CCCH domain-containing protein 9 (321 aa).

Disordered regions lie at residues 1 to 59 (MADA…PGKK) and 181 to 269 (REAE…NLQE). Positions 10–29 (EAERRSDETESRSIKEPKEK) are enriched in basic and acidic residues. The C3H1-type zinc finger occupies 55–83 (RPGKKDCQFYLKNGLCRYRSSCRFNHPTQ). Residues 164–290 (TEWRFERERM…EARLRLEQIR (127 aa)) are a coiled coil. 2 stretches are compositionally biased toward basic and acidic residues: residues 181–224 (REAE…REAQ) and 231–244 (RQRDSIERQRREAQ).

In Arabidopsis thaliana (Mouse-ear cress), this protein is Putative zinc finger CCCH domain-containing protein 9.